The following is a 444-amino-acid chain: Putative zinc metalloprotease PD_0327 (444 aa).

H22 provides a ligand contact to Zn(2+). E23 is a catalytic residue. H26 lines the Zn(2+) pocket. Residues 98-120 traverse the membrane as a helical segment; the sequence is IAIVAAGPLANLLLCMLLLWVLF. The 87-residue stretch at 192–278 folds into the PDZ domain; the sequence is TLELSKLKQP…HPGMIEIRRG (87 aa). The next 2 membrane-spanning stretches (helical) occupy residues 371-393 and 418-440; these read VGWF…LFPI and AMAA…AFYN.

The protein belongs to the peptidase M50B family. It depends on Zn(2+) as a cofactor.

It is found in the cell inner membrane. The polypeptide is Putative zinc metalloprotease PD_0327 (Xylella fastidiosa (strain Temecula1 / ATCC 700964)).